Consider the following 208-residue polypeptide: Probable GTP-binding protein EngB (208 aa).

Residues 22–195 (GLPEIALAGR…WGALEDIFVE (174 aa)) enclose the EngB-type G domain. GTP-binding positions include 30 to 37 (GRSNVGKS), 57 to 61 (GKTRT), 75 to 78 (DLPG), 142 to 145 (TKSD), and 174 to 176 (ISS). Residues Ser37 and Thr59 each contribute to the Mg(2+) site.

It belongs to the TRAFAC class TrmE-Era-EngA-EngB-Septin-like GTPase superfamily. EngB GTPase family. It depends on Mg(2+) as a cofactor.

Its function is as follows. Necessary for normal cell division and for the maintenance of normal septation. This chain is Probable GTP-binding protein EngB, found in Alkaliphilus metalliredigens (strain QYMF).